Here is a 55-residue protein sequence, read N- to C-terminus: MAKAVTIKIKLVSTADTGFYYVAKKNSRTMTDKMVKKKYDPVARKHVEFKESKIK.

This sequence belongs to the bacterial ribosomal protein bL33 family.

The protein is Large ribosomal subunit protein bL33 of Rhodopseudomonas palustris (strain BisB18).